A 218-amino-acid chain; its full sequence is Phosphatidylserine decarboxylase proenzyme (218 aa).

The active-site Schiff-base intermediate with substrate; via pyruvic acid is the Ser182. Ser182 carries the pyruvic acid (Ser); by autocatalysis modification.

This sequence belongs to the phosphatidylserine decarboxylase family. PSD-A subfamily. Heterodimer of a large membrane-associated beta subunit and a small pyruvoyl-containing alpha subunit. Requires pyruvate as cofactor. Is synthesized initially as an inactive proenzyme. Formation of the active enzyme involves a self-maturation process in which the active site pyruvoyl group is generated from an internal serine residue via an autocatalytic post-translational modification. Two non-identical subunits are generated from the proenzyme in this reaction, and the pyruvate is formed at the N-terminus of the alpha chain, which is derived from the carboxyl end of the proenzyme. The post-translation cleavage follows an unusual pathway, termed non-hydrolytic serinolysis, in which the side chain hydroxyl group of the serine supplies its oxygen atom to form the C-terminus of the beta chain, while the remainder of the serine residue undergoes an oxidative deamination to produce ammonia and the pyruvoyl prosthetic group on the alpha chain.

The protein localises to the cell membrane. It carries out the reaction a 1,2-diacyl-sn-glycero-3-phospho-L-serine + H(+) = a 1,2-diacyl-sn-glycero-3-phosphoethanolamine + CO2. It functions in the pathway phospholipid metabolism; phosphatidylethanolamine biosynthesis; phosphatidylethanolamine from CDP-diacylglycerol: step 2/2. Functionally, catalyzes the formation of phosphatidylethanolamine (PtdEtn) from phosphatidylserine (PtdSer). This chain is Phosphatidylserine decarboxylase proenzyme, found in Oleidesulfovibrio alaskensis (strain ATCC BAA-1058 / DSM 17464 / G20) (Desulfovibrio alaskensis).